Reading from the N-terminus, the 245-residue chain is DNA polymerase sliding clamp 2 (245 aa).

This sequence belongs to the PCNA family. As to quaternary structure, forms homodimers with PCNA1, which then recruit PCNA3; does not form homotrimers. The heterodimers interact with RfcS homotetramers. Heterotrimer which circularizes head-to-tail (head is at N-terminus, tail is at C-terminus) to form a toroid; DNA passes through its center. Replication factor C (RFC) is required to load the toroid on the DNA. This subunit interacts with DNA polymerase I (dpo1). The heterotrimer also interacts with flap endonuclease 1, DNA ligase and XPF via the other subunits.

One of the sliding clamp subunits that acts as a moving platform for DNA processing. Responsible for tethering the catalytic subunit of DNA polymerase to DNA during high-speed replication. Heterotrimer stimulates the Holliday junction resolvase Hjc. DNA polymerase I, DNA ligase and the flap endonuclease may be constitutively associated with the PCNA heterotrimer forming a scanning complex able to couple DNA synthesis and Okazaki fragment maturation. This is DNA polymerase sliding clamp 2 from Saccharolobus solfataricus (strain ATCC 35092 / DSM 1617 / JCM 11322 / P2) (Sulfolobus solfataricus).